Consider the following 66-residue polypeptide: MILFQSNTTNTINVQTTLNHDMENHTTSYAYINIQPKYAMHLKITILIVIGILILSVILYFLFSYD.

Residues asparagine 7 and asparagine 24 are each glycosylated (N-linked (GlcNAc...) asparagine; by host). The chain crosses the membrane as a helical span at residues 44-64 (ITILIVIGILILSVILYFLFS).

It is found in the host nucleus membrane. The sequence is that of Early E3 7.7 kDa protein from Human adenovirus B serotype 7 (HAdV-7).